The chain runs to 218 residues: UPF0502 protein VS_II0353 (218 aa).

Belongs to the UPF0502 family.

This Vibrio atlanticus (strain LGP32) (Vibrio splendidus (strain Mel32)) protein is UPF0502 protein VS_II0353.